A 353-amino-acid polypeptide reads, in one-letter code: (S)-8-amino-7-oxononanoate synthase BioU (353 aa).

10–14 (GTGGI) contributes to the NAD(+) binding site. The active-site Nucleophile is K147. Residue K147 is modified to Allysine. NAD(+) is bound at residue 214–215 (GT). Catalysis depends on E218, which acts as the Proton acceptor. The Proton donor and proton acceptor role is filled by H222.

This sequence belongs to the BioU family. As to quaternary structure, monomer.

It carries out the reaction (8S)-8-amino-7-oxononanoate + L-lysyl-[protein] + CO2 = (S)-2-amino-6-oxohexanoyl-[protein] + (7R,8S)-8-amino-7-(carboxyamino)nonanoate + 2 H(+). The catalysed reaction is (8S)-8-amino-7-oxononanoate + L-lysyl-[protein] + NADPH + H(+) = N(6)-[(2S,3R)-2-amino-8-carboxyoctan-3-yl]-L-lysyl-[protein] + NADP(+) + H2O. It catalyses the reaction N(6)-[(2S,3R)-2-amino-8-carboxyoctan-3-yl]-L-lysyl-[protein] + CO2 + NADP(+) + H2O = (S)-2-amino-6-oxohexanoyl-[protein] + (7R,8S)-8-amino-7-(carboxyamino)nonanoate + NADPH + 3 H(+). The enzyme catalyses (8S)-8-amino-7-oxononanoate + L-lysyl-[protein] + NADH + H(+) = N(6)-[(2S,3R)-2-amino-8-carboxyoctan-3-yl]-L-lysyl-[protein] + NAD(+) + H2O. It carries out the reaction N(6)-[(2S,3R)-2-amino-8-carboxyoctan-3-yl]-L-lysyl-[protein] + CO2 + NAD(+) + H2O = (S)-2-amino-6-oxohexanoyl-[protein] + (7R,8S)-8-amino-7-(carboxyamino)nonanoate + NADH + 3 H(+). Its pathway is cofactor biosynthesis; biotin biosynthesis. Functionally, a 'suicide' enzyme that participates in biotin synthesis. Catalyzes the formation of (S)-8-amino-7-oxononanoate (DAN-carbamic acid) from (7R,8S)-8-amino-7-(carboxyamino)nonanoate (DAN), a function equivalent to the cannonical BioA reaction and the first half-reaction of BioD. The cellular requirement for biotin is thought be low enough that this single turnover enzyme supplies a sufficient amount of the cofactor. Overall it catalyzes three reactions: formation of a covalent linkage with 8-amino-7-oxononanoate to yield a BioU-DAN conjugate at the epsilon-amino group of Lys124 of BioU using NAD(P)H, carboxylation of the conjugate to form BioU-DAN-carbamic acid, and release of DAN-carbamic acid using NAD(P)+. Complements a bioA deletion in E.coli. The protein is (S)-8-amino-7-oxononanoate synthase BioU of Haloferax mediterranei (strain ATCC 33500 / DSM 1411 / JCM 8866 / NBRC 14739 / NCIMB 2177 / R-4) (Halobacterium mediterranei).